Here is a 432-residue protein sequence, read N- to C-terminus: Adenylosuccinate synthetase (432 aa).

GTP contacts are provided by residues 13-19 (GDEGKGK) and 41-43 (GHT). Asp-14 (proton acceptor) is an active-site residue. Mg(2+) is bound by residues Asp-14 and Gly-41. IMP contacts are provided by residues 14 to 17 (DEGK), 39 to 42 (NAGH), Thr-130, Arg-144, Gln-225, Thr-240, and Arg-304. His-42 (proton donor) is an active-site residue. A substrate-binding site is contributed by 300 to 306 (ATTGRRR). Residues Arg-306, 332 to 334 (KLD), and 415 to 417 (STG) contribute to the GTP site.

This sequence belongs to the adenylosuccinate synthetase family. Homodimer. Mg(2+) serves as cofactor.

It localises to the cytoplasm. It carries out the reaction IMP + L-aspartate + GTP = N(6)-(1,2-dicarboxyethyl)-AMP + GDP + phosphate + 2 H(+). The protein operates within purine metabolism; AMP biosynthesis via de novo pathway; AMP from IMP: step 1/2. Plays an important role in the de novo pathway of purine nucleotide biosynthesis. Catalyzes the first committed step in the biosynthesis of AMP from IMP. The protein is Adenylosuccinate synthetase of Pectobacterium carotovorum subsp. carotovorum (strain PC1).